The chain runs to 335 residues: MLSMKVAVLGAGAWGTALAAHLAVRHDTLLWARDAALVAELAARRENARYLGGVALPPGLRYEADLATALSHAQADDALCVIAAPVAGLRALCRAMRDARRVPAHFVWVCKGFEADTRRLPHQMVAEELPDHASYGVLSGPSFAREVAQGLPVALTVASASAACRERTLAAFHHGAMRIYTGDDVVGVEVGGAVKNVLAIATGIADGLGLGLNARAALVTRGLAEMSRLGVALGGRAETFTGLTGLGDLILTATGDLSRNRSVGLQLAAGRSLDDILAALGHVAEGVRCARAVLSIARERGVDMPITEAVCAVLFDGVAPRDAVSGLLRRDAKAE.

Positions 14, 33, and 111 each coordinate NADPH. Sn-glycerol 3-phosphate is bound by residues Lys111, Gly140, and Ser142. Ala144 contacts NADPH. The sn-glycerol 3-phosphate site is built by Lys195, Asp248, Ser258, Arg259, and Asn260. Catalysis depends on Lys195, which acts as the Proton acceptor. An NADPH-binding site is contributed by Arg259. Positions 283 and 285 each coordinate NADPH.

This sequence belongs to the NAD-dependent glycerol-3-phosphate dehydrogenase family.

It is found in the cytoplasm. It catalyses the reaction sn-glycerol 3-phosphate + NAD(+) = dihydroxyacetone phosphate + NADH + H(+). The catalysed reaction is sn-glycerol 3-phosphate + NADP(+) = dihydroxyacetone phosphate + NADPH + H(+). The protein operates within membrane lipid metabolism; glycerophospholipid metabolism. Functionally, catalyzes the reduction of the glycolytic intermediate dihydroxyacetone phosphate (DHAP) to sn-glycerol 3-phosphate (G3P), the key precursor for phospholipid synthesis. In Burkholderia mallei (strain NCTC 10247), this protein is Glycerol-3-phosphate dehydrogenase [NAD(P)+].